Reading from the N-terminus, the 88-residue chain is Apolipoprotein C-I (88 aa).

The N-terminal stretch at 1-26 (MRLLISLPVLIVVLAMALEGPAPAQA) is a signal peptide.

It belongs to the apolipoprotein C1 family.

The protein resides in the secreted. Its function is as follows. Inhibitor of lipoprotein binding to the low density lipoprotein (LDL) receptor, LDL receptor-related protein, and very low density lipoprotein (VLDL) receptor. Associates with high density lipoproteins (HDL) and the triacylglycerol-rich lipoproteins in the plasma and makes up about 10% of the protein of the VLDL and 2% of that of HDL. Appears to interfere directly with fatty acid uptake and is also the major plasma inhibitor of cholesteryl ester transfer protein (CETP). Modulates the interaction of APOE with beta-migrating VLDL and inhibits binding of beta-VLDL to the LDL receptor-related protein. Binds free fatty acids and reduces their intracellular esterification. The chain is Apolipoprotein C-I (APOC1) from Mesocricetus auratus (Golden hamster).